Reading from the N-terminus, the 461-residue chain is Probable ornithine decarboxylase (461 aa).

A disordered region spans residues 1 to 35 (MTGTKRNGEEVVNENNNNNVAEETNKKAKVDESST). The span at 13 to 22 (NENNNNNVAE) shows a compositional bias: low complexity. The segment covering 23–32 (ETNKKAKVDE) has biased composition (basic and acidic residues). K116 carries the N6-(pyridoxal phosphate)lysine modification. Pyridoxal 5'-phosphate-binding positions include S247, G284, and 317 to 320 (EPGR). A substrate-binding site is contributed by 375–376 (FD). C402 serves as the catalytic Proton donor; shared with dimeric partner. D403 serves as a coordination point for substrate. Y431 is a binding site for pyridoxal 5'-phosphate.

The protein belongs to the Orn/Lys/Arg decarboxylase class-II family. Homodimer. Only the dimer is catalytically active, as the active sites are constructed of residues from both monomers. Pyridoxal 5'-phosphate serves as cofactor.

It carries out the reaction L-ornithine + H(+) = putrescine + CO2. It participates in amine and polyamine biosynthesis; putrescine biosynthesis via L-ornithine pathway; putrescine from L-ornithine: step 1/1. Inhibited by antizyme (AZ) in response to polyamine levels. AZ inhibits the assembly of the functional homodimer by binding to ODC monomers and targeting them for ubiquitin-independent proteolytic destruction by the 26S proteasome. Its function is as follows. Catalyzes the first and rate-limiting step of polyamine biosynthesis that converts ornithine into putrescine, which is the precursor for the polyamines, spermidine and spermine. Polyamines are essential for cell proliferation and are implicated in cellular processes, ranging from DNA replication to apoptosis. The chain is Probable ornithine decarboxylase (odc) from Dictyostelium discoideum (Social amoeba).